Consider the following 86-residue polypeptide: YcgL domain-containing protein IL1825 (86 aa).

A YcgL domain is found at 1-85 (MLCDVYRSSK…KREELQVNVN (85 aa)).

The protein is YcgL domain-containing protein IL1825 of Idiomarina loihiensis (strain ATCC BAA-735 / DSM 15497 / L2-TR).